The following is a 315-amino-acid chain: Acetyl-coenzyme A carboxylase carboxyl transferase subunit alpha (315 aa).

A CoA carboxyltransferase C-terminal domain is found at 32-289 (EIDLLEASLE…KQAFVDQLEQ (258 aa)).

It belongs to the AccA family. In terms of assembly, acetyl-CoA carboxylase is a heterohexamer composed of biotin carboxyl carrier protein (AccB), biotin carboxylase (AccC) and two subunits each of ACCase subunit alpha (AccA) and ACCase subunit beta (AccD).

The protein resides in the cytoplasm. The enzyme catalyses N(6)-carboxybiotinyl-L-lysyl-[protein] + acetyl-CoA = N(6)-biotinyl-L-lysyl-[protein] + malonyl-CoA. It functions in the pathway lipid metabolism; malonyl-CoA biosynthesis; malonyl-CoA from acetyl-CoA: step 1/1. Component of the acetyl coenzyme A carboxylase (ACC) complex. First, biotin carboxylase catalyzes the carboxylation of biotin on its carrier protein (BCCP) and then the CO(2) group is transferred by the carboxyltransferase to acetyl-CoA to form malonyl-CoA. The sequence is that of Acetyl-coenzyme A carboxylase carboxyl transferase subunit alpha from Staphylococcus haemolyticus (strain JCSC1435).